Reading from the N-terminus, the 166-residue chain is Large ribosomal subunit protein uL10 (166 aa).

The protein belongs to the universal ribosomal protein uL10 family. In terms of assembly, part of the ribosomal stalk of the 50S ribosomal subunit. The N-terminus interacts with L11 and the large rRNA to form the base of the stalk. The C-terminus forms an elongated spine to which L12 dimers bind in a sequential fashion forming a multimeric L10(L12)X complex.

In terms of biological role, forms part of the ribosomal stalk, playing a central role in the interaction of the ribosome with GTP-bound translation factors. The protein is Large ribosomal subunit protein uL10 of Shewanella denitrificans (strain OS217 / ATCC BAA-1090 / DSM 15013).